The primary structure comprises 259 residues: 14-3-3-like protein (259 aa).

A disordered region spans residues 238–259 (MQDPAAGDDREGADMKVEDAEP). The span at 244–259 (GDDREGADMKVEDAEP) shows a compositional bias: basic and acidic residues.

It belongs to the 14-3-3 family.

This Chlamydomonas reinhardtii (Chlamydomonas smithii) protein is 14-3-3-like protein.